Here is a 146-residue protein sequence, read N- to C-terminus: uncharacterized protein (146 aa).

A helical membrane pass occupies residues 7–27 (FVLSITIVLVILIIIAYIWYN).

It belongs to the asfivirus E146L family.

Its subcellular location is the host membrane. The protein resides in the virion. This is an uncharacterized protein from Ornithodoros (relapsing fever ticks).